We begin with the raw amino-acid sequence, 370 residues long: NADH-quinone oxidoreductase subunit D 2 (370 aa).

The protein belongs to the complex I 49 kDa subunit family. NDH-1 is composed of 14 different subunits. Subunits NuoB, C, D, E, F, and G constitute the peripheral sector of the complex.

Its subcellular location is the cell membrane. The catalysed reaction is a quinone + NADH + 5 H(+)(in) = a quinol + NAD(+) + 4 H(+)(out). Its function is as follows. NDH-1 shuttles electrons from NADH, via FMN and iron-sulfur (Fe-S) centers, to quinones in the respiratory chain. The immediate electron acceptor for the enzyme in this species is believed to be ubiquinone. Couples the redox reaction to proton translocation (for every two electrons transferred, four hydrogen ions are translocated across the cytoplasmic membrane), and thus conserves the redox energy in a proton gradient. The chain is NADH-quinone oxidoreductase subunit D 2 from Herpetosiphon aurantiacus (strain ATCC 23779 / DSM 785 / 114-95).